We begin with the raw amino-acid sequence, 154 residues long: Large ribosomal subunit protein uL13 (154 aa).

The protein belongs to the universal ribosomal protein uL13 family. In terms of assembly, part of the 50S ribosomal subunit.

Its function is as follows. This protein is one of the early assembly proteins of the 50S ribosomal subunit, although it is not seen to bind rRNA by itself. It is important during the early stages of 50S assembly. This chain is Large ribosomal subunit protein uL13, found in Borrelia garinii subsp. bavariensis (strain ATCC BAA-2496 / DSM 23469 / PBi) (Borreliella bavariensis).